A 212-amino-acid chain; its full sequence is Riboflavin synthase (212 aa).

2 Lumazine-binding repeats span residues Met1–His97 and Leu98–Val195. Residues Gly4–Val6, Cys48–Thr50, Asp62–Thr67, Gly101–Ile103, Lys137, Ser146–Thr148, and Phe160–Thr165 each bind 2,4-dihydroxypteridine.

In terms of assembly, homotrimer.

The enzyme catalyses 2 6,7-dimethyl-8-(1-D-ribityl)lumazine + H(+) = 5-amino-6-(D-ribitylamino)uracil + riboflavin. Its pathway is cofactor biosynthesis; riboflavin biosynthesis; riboflavin from 2-hydroxy-3-oxobutyl phosphate and 5-amino-6-(D-ribitylamino)uracil: step 2/2. Functionally, catalyzes the dismutation of two molecules of 6,7-dimethyl-8-ribityllumazine, resulting in the formation of riboflavin and 5-amino-6-(D-ribitylamino)uracil. The protein is Riboflavin synthase (ribE) of Buchnera aphidicola subsp. Baizongia pistaciae (strain Bp).